The primary structure comprises 367 residues: DNA replication and repair protein RecF (367 aa).

An ATP-binding site is contributed by G30–T37.

It belongs to the RecF family.

Its subcellular location is the cytoplasm. The RecF protein is involved in DNA metabolism; it is required for DNA replication and normal SOS inducibility. RecF binds preferentially to single-stranded, linear DNA. It also seems to bind ATP. This is DNA replication and repair protein RecF from Chlamydia abortus (strain DSM 27085 / S26/3) (Chlamydophila abortus).